A 140-amino-acid chain; its full sequence is ATP synthase epsilon chain (140 aa).

The protein belongs to the ATPase epsilon chain family. F-type ATPases have 2 components, CF(1) - the catalytic core - and CF(0) - the membrane proton channel. CF(1) has five subunits: alpha(3), beta(3), gamma(1), delta(1), epsilon(1). CF(0) has three main subunits: a, b and c.

It is found in the cell inner membrane. Produces ATP from ADP in the presence of a proton gradient across the membrane. This chain is ATP synthase epsilon chain, found in Legionella pneumophila (strain Paris).